A 374-amino-acid chain; its full sequence is tRNA (adenine(58)-N(1))-methyltransferase catalytic subunit TRM61 (374 aa).

S-adenosyl-L-methionine contacts are provided by residues 120–122 (SGS), Glu-138, Arg-143, 167–168 (DV), and Asp-202.

Belongs to the class I-like SAM-binding methyltransferase superfamily. TRM61 family. Heterotetramer; composed of two copies of TRM6 and two copies of TRM61.

Its subcellular location is the nucleus. It catalyses the reaction adenosine(58) in tRNA + S-adenosyl-L-methionine = N(1)-methyladenosine(58) in tRNA + S-adenosyl-L-homocysteine + H(+). Its function is as follows. Catalytic subunit of tRNA (adenine-N(1)-)-methyltransferase, which catalyzes the formation of N(1)-methyladenine at position 58 (m1A58) in initiator methionyl-tRNA. In Candida glabrata (strain ATCC 2001 / BCRC 20586 / JCM 3761 / NBRC 0622 / NRRL Y-65 / CBS 138) (Yeast), this protein is tRNA (adenine(58)-N(1))-methyltransferase catalytic subunit TRM61 (TRM61).